The chain runs to 305 residues: Phosphatidylglycerol--prolipoprotein diacylglyceryl transferase (305 aa).

The next 3 membrane-spanning stretches (helical) occupy residues 10-30 (FLIS…GAII), 59-79 (LMLG…AFEW), and 92-112 (LTTG…STVI). R140 contributes to the a 1,2-diacyl-sn-glycero-3-phospho-(1'-sn-glycerol) binding site. 2 consecutive transmembrane segments (helical) span residues 182-202 (LFHP…GILL) and 260-280 (IRVA…LIFL).

Belongs to the Lgt family.

It is found in the cell membrane. The enzyme catalyses L-cysteinyl-[prolipoprotein] + a 1,2-diacyl-sn-glycero-3-phospho-(1'-sn-glycerol) = an S-1,2-diacyl-sn-glyceryl-L-cysteinyl-[prolipoprotein] + sn-glycerol 1-phosphate + H(+). The protein operates within protein modification; lipoprotein biosynthesis (diacylglyceryl transfer). Its function is as follows. Catalyzes the transfer of the diacylglyceryl group from phosphatidylglycerol to the sulfhydryl group of the N-terminal cysteine of a prolipoprotein, the first step in the formation of mature lipoproteins. The chain is Phosphatidylglycerol--prolipoprotein diacylglyceryl transferase from Chloroflexus aggregans (strain MD-66 / DSM 9485).